A 257-amino-acid chain; its full sequence is UPF0259 membrane protein WIGBR3650 (257 aa).

Transmembrane regions (helical) follow at residues 23 to 43 (IIFF…IFLP), 89 to 109 (LSSL…INTI), 122 to 142 (IILS…ISFL), 148 to 168 (ALML…PILI), 190 to 210 (IKTV…ILVI), and 223 to 243 (VKIF…IYMY).

This sequence belongs to the UPF0259 family.

The protein localises to the cell membrane. The sequence is that of UPF0259 membrane protein WIGBR3650 from Wigglesworthia glossinidia brevipalpis.